We begin with the raw amino-acid sequence, 860 residues long: Leucine--tRNA ligase (860 aa).

The 'HIGH' region motif lies at 42 to 52; that stretch reads PYPSGRLHMGH. The 'KMSKS' region signature appears at 619 to 623; sequence KMSKS. Lysine 622 lines the ATP pocket.

This sequence belongs to the class-I aminoacyl-tRNA synthetase family.

The protein resides in the cytoplasm. It catalyses the reaction tRNA(Leu) + L-leucine + ATP = L-leucyl-tRNA(Leu) + AMP + diphosphate. In Salmonella paratyphi B (strain ATCC BAA-1250 / SPB7), this protein is Leucine--tRNA ligase.